The following is a 425-amino-acid chain: Enolase (425 aa).

Q162 provides a ligand contact to (2R)-2-phosphoglycerate. E204 serves as the catalytic Proton donor. D241, E282, and D309 together coordinate Mg(2+). The (2R)-2-phosphoglycerate site is built by K334, R363, S364, and K385. K334 functions as the Proton acceptor in the catalytic mechanism.

This sequence belongs to the enolase family. The cofactor is Mg(2+).

It is found in the cytoplasm. The protein localises to the secreted. It localises to the cell surface. The enzyme catalyses (2R)-2-phosphoglycerate = phosphoenolpyruvate + H2O. The protein operates within carbohydrate degradation; glycolysis; pyruvate from D-glyceraldehyde 3-phosphate: step 4/5. Catalyzes the reversible conversion of 2-phosphoglycerate (2-PG) into phosphoenolpyruvate (PEP). It is essential for the degradation of carbohydrates via glycolysis. This is Enolase from Corynebacterium jeikeium (strain K411).